The following is a 375-amino-acid chain: N-acetylneuraminate epimerase (375 aa).

Positions 1 to 22 (MKLTKTALCTALFATFTFSANA) are cleaved as a signal peptide. Kelch repeat units follow at residues 43 to 87 (TVYV…AAVD), 89 to 140 (KLYV…ASHG), 142 to 176 (KVYI…EIAA), 177 to 222 (AYFD…TIQG), 225 to 273 (LVVV…LAGA), 295 to 344 (KQYK…SYNN), and 346 to 375 (VLLI…LTIE). The Proton acceptor role is filled by Glu-231.

It belongs to the NanM family. In terms of assembly, homodimer.

The protein localises to the periplasm. It carries out the reaction N-acetyl-alpha-neuraminate = N-acetyl-beta-neuraminate. Functionally, converts alpha-N-acetylneuranimic acid (Neu5Ac) to the beta-anomer, accelerating the equilibrium between the alpha- and beta-anomers. Probably facilitates sialidase-negative bacteria to compete successfully for limited amounts of extracellular Neu5Ac, which is likely taken up in the beta-anomer. In addition, the rapid removal of sialic acid from solution might be advantageous to the bacterium to damp down host responses. This is N-acetylneuraminate epimerase from Haemophilus influenzae (strain PittEE).